The chain runs to 465 residues: Zinc finger and BTB domain-containing protein 32 (465 aa).

The 59-residue stretch at 29-87 (CDTLITVGGLEFPAHSLVLAGASPRLGCRGRWALVEDISPSTFAQILTFVYGESIELQP) folds into the BTB domain. 2 disordered regions span residues 111–179 (RAQK…EMAG) and 285–310 (QNQL…PWQI). Basic and acidic residues-rich tracts occupy residues 123–139 (PGLK…RGSE) and 147–176 (EKQK…ERPE). C2H2-type zinc fingers lie at residues 350–372 (YSCS…YRVH), 378–400 (FSCS…LRTH), and 405–427 (YRCP…MRGH).

Belongs to the krueppel C2H2-type zinc-finger protein family. As to quaternary structure, homodimer (via PTB domain). Interacts with the N-terminal of FANCC. Interacts with ZBTB16. Interacts with GATA3. In terms of tissue distribution, isoform 1 is testis-specific and is not expressed in lymphoid organs such as thymus or spleen. Isoform 2 is expressed in both B- and T-lymphoid cells.

Its subcellular location is the nucleus. DNA-binding protein that binds to the to a 5'-TGTACAGTGT-3' core sequence. May function as a transcriptional transactivator and transcriptional repressor. Probably exerts its repressor effect by preventing GATA3 from binding to DNA. May play a role in regulating the differentiation and activation of helper T-cells. In Mus musculus (Mouse), this protein is Zinc finger and BTB domain-containing protein 32 (Zbtb32).